The primary structure comprises 177 residues: Cell division protein ZapC (177 aa).

Belongs to the ZapC family. In terms of assembly, interacts directly with FtsZ.

It is found in the cytoplasm. Its function is as follows. Contributes to the efficiency of the cell division process by stabilizing the polymeric form of the cell division protein FtsZ. Acts by promoting interactions between FtsZ protofilaments and suppressing the GTPase activity of FtsZ. The protein is Cell division protein ZapC of Shewanella frigidimarina (strain NCIMB 400).